Reading from the N-terminus, the 275-residue chain is MIRIFNQKGKLYEGPIWAYNSLYFVDIPKGELHNLKEDGTHWAVKFPTYVSSLQPTKRGGIIVTAGNGFYLVKDKDQISLLYEVKDWDSRNRFNDGKCDQMGRYWIGTMNLEEKYPTGGLFVLDLDMKFRRVLTDVTISNGLAWSLDNKYLYYIDSPTRKIFKFKFDLERGDISQREVLIDLKEYEGVPDGMTIDSEGNLWVALYGGGAVLRIDVEKRKVIQELRLPAPRVTSVIFGGSNMDTLFITTANDHPDGGFVYSERVDVKGVETYYCGF.

It belongs to the SMP-30/CGR1 family.

This is an uncharacterized protein from Sulfolobus acidocaldarius (strain ATCC 33909 / DSM 639 / JCM 8929 / NBRC 15157 / NCIMB 11770).